The primary structure comprises 586 residues: YTH domain-containing family protein 2 (586 aa).

Disordered stretches follow at residues 98–128, 141–181, and 301–464; these read LKEKVKQSRALRQSVNNAAEQQPSTKPQPVQ, SQDQ…KESP, and QGLA…PLVS. 3 stretches are compositionally biased toward polar residues: residues 107–128, 169–181, and 352–368; these read ALRQSVNNAAEQQPSTKPQPVQ, TLPTTPRTIKESP, and SSQAALSCKSKQSTDIQ. Over residues 398 to 418 the composition is skewed to basic residues; that stretch reads CARRHRSSSPRGRSGSHKSRR. Residues 421–436 show a composition bias toward polar residues; that stretch reads TDSPVSRSTTKSTPSR. In terms of domain architecture, YTH spans 435-576; sequence SRARQPGHRD…YCGRDLLRLM (142 aa). Residues 441-458 show a composition bias toward basic and acidic residues; the sequence is GHRDYREYRDDRNRDTKP.

Belongs to the YTHDF family. YTHDF1 subfamily.

Its function is as follows. Specifically recognizes and binds N6-methyladenosine (m6A)-containing mRNAs, and regulates their stability. M6A is a modification present at internal sites of mRNAs and some non-coding RNAs and plays a role in mRNA stability and processing. Plays a role in pathogenicity towards plant host. This is YTH domain-containing family protein 2 from Pyricularia oryzae (strain 70-15 / ATCC MYA-4617 / FGSC 8958) (Rice blast fungus).